The following is a 391-amino-acid chain: Phosphoglycerate kinase (391 aa).

Substrate-binding positions include 21–23 (DLN), arginine 36, 59–62 (HLGR), arginine 113, and arginine 146. ATP-binding positions include lysine 197, glutamate 319, and 345–348 (GGDT).

Belongs to the phosphoglycerate kinase family. In terms of assembly, monomer.

It is found in the cytoplasm. It carries out the reaction (2R)-3-phosphoglycerate + ATP = (2R)-3-phospho-glyceroyl phosphate + ADP. Its pathway is carbohydrate degradation; glycolysis; pyruvate from D-glyceraldehyde 3-phosphate: step 2/5. The sequence is that of Phosphoglycerate kinase from Xanthomonas euvesicatoria pv. vesicatoria (strain 85-10) (Xanthomonas campestris pv. vesicatoria).